Reading from the N-terminus, the 280-residue chain is UPF0276 protein CC_3255 (280 aa).

The protein belongs to the UPF0276 family.

This is UPF0276 protein CC_3255 from Caulobacter vibrioides (strain ATCC 19089 / CIP 103742 / CB 15) (Caulobacter crescentus).